We begin with the raw amino-acid sequence, 212 residues long: Thymidylate kinase (212 aa).

Residue 10–17 (GPEGAGKT) participates in ATP binding.

This sequence belongs to the thymidylate kinase family.

The catalysed reaction is dTMP + ATP = dTDP + ADP. In terms of biological role, phosphorylation of dTMP to form dTDP in both de novo and salvage pathways of dTTP synthesis. The protein is Thymidylate kinase of Bacillus velezensis (strain DSM 23117 / BGSC 10A6 / LMG 26770 / FZB42) (Bacillus amyloliquefaciens subsp. plantarum).